The following is a 93-amino-acid chain: Leydig cell tumor 10 kDa protein (93 aa).

The interval Met1–Val41 is disordered. Residues Lys7–Ala18 show a composition bias toward low complexity. A compositionally biased stretch (basic residues) spans Gly25–Arg39.

It belongs to the UPF0390 family. As to expression, leydig cell tumor, testis and placenta.

In terms of biological role, may have a potential role in hypercalcemia of malignancy. The sequence is that of Leydig cell tumor 10 kDa protein from Rattus norvegicus (Rat).